Reading from the N-terminus, the 162-residue chain is SsrA-binding protein (162 aa).

The segment at 140–162 (DKRETAAKRDWSRQKSRLMKDHG) is disordered.

It belongs to the SmpB family.

It localises to the cytoplasm. Required for rescue of stalled ribosomes mediated by trans-translation. Binds to transfer-messenger RNA (tmRNA), required for stable association of tmRNA with ribosomes. tmRNA and SmpB together mimic tRNA shape, replacing the anticodon stem-loop with SmpB. tmRNA is encoded by the ssrA gene; the 2 termini fold to resemble tRNA(Ala) and it encodes a 'tag peptide', a short internal open reading frame. During trans-translation Ala-aminoacylated tmRNA acts like a tRNA, entering the A-site of stalled ribosomes, displacing the stalled mRNA. The ribosome then switches to translate the ORF on the tmRNA; the nascent peptide is terminated with the 'tag peptide' encoded by the tmRNA and targeted for degradation. The ribosome is freed to recommence translation, which seems to be the essential function of trans-translation. This Roseobacter denitrificans (strain ATCC 33942 / OCh 114) (Erythrobacter sp. (strain OCh 114)) protein is SsrA-binding protein.